The sequence spans 210 residues: Dephospho-CoA kinase (210 aa).

A DPCK domain is found at valine 15–lysine 210. Glycine 23–alanine 28 provides a ligand contact to ATP.

It belongs to the CoaE family.

Its subcellular location is the cytoplasm. It catalyses the reaction 3'-dephospho-CoA + ATP = ADP + CoA + H(+). It participates in cofactor biosynthesis; coenzyme A biosynthesis; CoA from (R)-pantothenate: step 5/5. Catalyzes the phosphorylation of the 3'-hydroxyl group of dephosphocoenzyme A to form coenzyme A. The chain is Dephospho-CoA kinase from Pseudoalteromonas translucida (strain TAC 125).